We begin with the raw amino-acid sequence, 709 residues long: Molybdenum cofactor sulfurase (709 aa).

Position 208 is an N6-(pyridoxal phosphate)lysine (lysine 208). Cysteine 367 is an active-site residue. In terms of domain architecture, MOSC spans 563 to 707 (DNALDRQNCR…LESGMSVNFS (145 aa)).

Belongs to the class-V pyridoxal-phosphate-dependent aminotransferase family. MOCOS subfamily. Pyridoxal 5'-phosphate is required as a cofactor.

It catalyses the reaction Mo-molybdopterin + L-cysteine + AH2 = thio-Mo-molybdopterin + L-alanine + A + H2O. The protein operates within cofactor biosynthesis; molybdopterin biosynthesis. Sulfurates the molybdenum cofactor. Sulfation of molybdenum is essential for xanthine dehydrogenase (XDH) and aldehyde oxidase (ADO) enzymes in which molybdenum cofactor is liganded by 1 oxygen and 1 sulfur atom in active form. This is Molybdenum cofactor sulfurase from Caenorhabditis elegans.